A 250-amino-acid polypeptide reads, in one-letter code: Probable aquaporin TIP2-2 (250 aa).

M1 bears the N-acetylmethionine mark. Residues M1–E24 lie on the Cytoplasmic side of the membrane. K3 carries the post-translational modification N6,N6-dimethyllysine. The chain crosses the membrane as a helical span at residues F25 to L45. Residues T46–P53 are Vacuolar-facing. A helical membrane pass occupies residues A54 to A74. The Cytoplasmic segment spans residues A75 to G101. Residues N83–A85 carry the NPA 1 motif. Residues F102–V122 traverse the membrane as a helical segment. The Vacuolar segment spans residues T123–V133. A helical membrane pass occupies residues A134–V154. Residues Y155–S168 lie on the Cytoplasmic side of the membrane. The chain crosses the membrane as a helical span at residues L169 to G189. Topologically, residues P190–D210 are vacuolar. The short motif at N197–A199 is the NPA 2 element. Residues F211 to I231 traverse the membrane as a helical segment. The Cytoplasmic segment spans residues Y232 to P250. S248 carries the post-translational modification Phosphoserine.

This sequence belongs to the MIP/aquaporin (TC 1.A.8) family. TIP (TC 1.A.8.10) subfamily. As to quaternary structure, interacts with cucumber mosaic virus (CMV) Protein 1a. In terms of tissue distribution, expressed above groung and in roots.

Its subcellular location is the vacuole membrane. Functionally, aquaporins facilitate the transport of water and small neutral solutes across cell membranes. This Arabidopsis thaliana (Mouse-ear cress) protein is Probable aquaporin TIP2-2 (TIP2-2).